The chain runs to 420 residues: Probable protein phosphatase 2C 76 (420 aa).

The PPM-type phosphatase domain occupies 101–347 (SCGYCSFRGK…DNITCIVVKF (247 aa)). Asp-137, Gly-138, Asp-299, and Asp-338 together coordinate Mn(2+). A disordered region spans residues 353–420 (ESPKIETNAM…PETKGEKAGE (68 aa)). Positions 403–420 (PDPKPETEPETKGEKAGE) are enriched in basic and acidic residues.

The protein belongs to the PP2C family. Mg(2+) is required as a cofactor. It depends on Mn(2+) as a cofactor.

It carries out the reaction O-phospho-L-seryl-[protein] + H2O = L-seryl-[protein] + phosphate. The catalysed reaction is O-phospho-L-threonyl-[protein] + H2O = L-threonyl-[protein] + phosphate. This Arabidopsis thaliana (Mouse-ear cress) protein is Probable protein phosphatase 2C 76.